Here is a 274-residue protein sequence, read N- to C-terminus: Urease accessory protein UreD (274 aa).

It belongs to the UreD family. As to quaternary structure, ureD, UreF and UreG form a complex that acts as a GTP-hydrolysis-dependent molecular chaperone, activating the urease apoprotein by helping to assemble the nickel containing metallocenter of UreC. The UreE protein probably delivers the nickel.

The protein resides in the cytoplasm. In terms of biological role, required for maturation of urease via the functional incorporation of the urease nickel metallocenter. The sequence is that of Urease accessory protein UreD from Thermosynechococcus vestitus (strain NIES-2133 / IAM M-273 / BP-1).